A 239-amino-acid polypeptide reads, in one-letter code: Phosphoribosylaminoimidazole-succinocarboxamide synthase (239 aa).

The protein belongs to the SAICAR synthetase family.

It carries out the reaction 5-amino-1-(5-phospho-D-ribosyl)imidazole-4-carboxylate + L-aspartate + ATP = (2S)-2-[5-amino-1-(5-phospho-beta-D-ribosyl)imidazole-4-carboxamido]succinate + ADP + phosphate + 2 H(+). The protein operates within purine metabolism; IMP biosynthesis via de novo pathway; 5-amino-1-(5-phospho-D-ribosyl)imidazole-4-carboxamide from 5-amino-1-(5-phospho-D-ribosyl)imidazole-4-carboxylate: step 1/2. This chain is Phosphoribosylaminoimidazole-succinocarboxamide synthase, found in Bacillus cereus (strain 03BB102).